Reading from the N-terminus, the 729-residue chain is MAPAPTPAAAAGRRVAVLAAALVAASLAASVGVANAAVSYDRRSLVINGRRRILLSGSIHYPRSTPEMWPGLIQKAKDGGLDVIQTYVFWNGHEPVQGQYYFSDRYDLVRFVKLVKQAGLYVHLRIGPYVCAEWNFGGFPVWLKYVPGVSFRTDNGPFKAEMQKFVEKIVSMMKSEGLFEWQGGPIIMSQVENEFGPMESVGGSGAKPYANWAAKMAVGTNTGVPWVMCKQDDAPDPVINTCNGFYCDYFSPNKNYKPSMWTEAWTGWFTSFGGGVPHRPVEDLAFAVARFIQKGGSFVNYYMYHGGTNFGRTAGGPFIATSYDYDAPIDEFGLLRQPKWGHLRDLHRAIKQAEPVLVSADPTIESIGSYEKAYVFKAKNGACAAFLSNYHMNTAVKVRFNGQQYNLPAWSISILPDCKTAVFNTATVKEPTLMPKMNPVVRFAWQSYSEDTNSLSDSAFTKDGLVEQLSMTWDKSDYLWYTTYVNIGTNDLRSGQSPQLTVYSAGHSMQVFVNGKSYGSVYGGYDNPKLTYNGRVKMWQGSNKISILSSAVGLPNVGNHFENWNVGVLGPVTLSSLNGGTKDLSHQKWTYQVGLKGETLGLHTVTGSSAVEWGGPGGYQPLTWHKAFFNAPAGNDPVALDMGSMGKGQLWVNGHHVGRYWSYKASGGCGGCSYAGTYHEDKCRSNCGDLSQRWYHVPRSWLKPGGNLLVVLEEYGGDLAGVSLATRTT.

An N-terminal signal peptide occupies residues methionine 1–asparagine 35. Glutamate 194 acts as the Proton donor in catalysis. The active-site Nucleophile is the glutamate 263.

It belongs to the glycosyl hydrolase 35 family.

The protein localises to the secreted. It localises to the extracellular space. Its subcellular location is the apoplast. The catalysed reaction is Hydrolysis of terminal non-reducing beta-D-galactose residues in beta-D-galactosides.. This chain is Beta-galactosidase 4, found in Oryza sativa subsp. japonica (Rice).